We begin with the raw amino-acid sequence, 136 residues long: Large ribosomal subunit protein bL20 (136 aa).

The protein belongs to the bacterial ribosomal protein bL20 family.

In terms of biological role, binds directly to 23S ribosomal RNA and is necessary for the in vitro assembly process of the 50S ribosomal subunit. It is not involved in the protein synthesizing functions of that subunit. The sequence is that of Large ribosomal subunit protein bL20 from Tropheryma whipplei (strain TW08/27) (Whipple's bacillus).